A 492-amino-acid polypeptide reads, in one-letter code: Bifunctional protein GlmU (492 aa).

The segment at 1 to 241 is pyrophosphorylase; it reads MIPENTGPAA…RWQVEGANDR (241 aa). Residues 14–17, Lys-28, Gln-81, 86–87, 112–114, Gly-151, Glu-166, Asn-181, and Asn-239 contribute to the UDP-N-acetyl-alpha-D-glucosamine site; these read LAAG, GT, and YGD. Asp-114 is a binding site for Mg(2+). Asn-239 lines the Mg(2+) pocket. Residues 242–262 form a linker region; that stretch reads VQLAALGAELNRRTVEAWMRA. The segment at 263 to 492 is N-acetyltransferase; that stretch reads GVTVVDPSTT…STPASTEEGK (230 aa). UDP-N-acetyl-alpha-D-glucosamine is bound by residues Arg-344 and Lys-362. Residue His-374 is the Proton acceptor of the active site. 2 residues coordinate UDP-N-acetyl-alpha-D-glucosamine: Tyr-377 and Asn-388. Residues 397-398, Ser-416, and Ala-434 each bind acetyl-CoA; that span reads NY. The disordered stretch occupies residues 460–492; sequence WVPANRPGSRSAELAQAAINNSSSTPASTEEGK. Positions 477–492 are enriched in polar residues; it reads AINNSSSTPASTEEGK.

In the N-terminal section; belongs to the N-acetylglucosamine-1-phosphate uridyltransferase family. It in the C-terminal section; belongs to the transferase hexapeptide repeat family. As to quaternary structure, homotrimer. Requires Mg(2+) as cofactor.

The protein resides in the cytoplasm. It carries out the reaction alpha-D-glucosamine 1-phosphate + acetyl-CoA = N-acetyl-alpha-D-glucosamine 1-phosphate + CoA + H(+). It catalyses the reaction N-acetyl-alpha-D-glucosamine 1-phosphate + UTP + H(+) = UDP-N-acetyl-alpha-D-glucosamine + diphosphate. The protein operates within nucleotide-sugar biosynthesis; UDP-N-acetyl-alpha-D-glucosamine biosynthesis; N-acetyl-alpha-D-glucosamine 1-phosphate from alpha-D-glucosamine 6-phosphate (route II): step 2/2. It functions in the pathway nucleotide-sugar biosynthesis; UDP-N-acetyl-alpha-D-glucosamine biosynthesis; UDP-N-acetyl-alpha-D-glucosamine from N-acetyl-alpha-D-glucosamine 1-phosphate: step 1/1. It participates in bacterial outer membrane biogenesis; LPS lipid A biosynthesis. In terms of biological role, catalyzes the last two sequential reactions in the de novo biosynthetic pathway for UDP-N-acetylglucosamine (UDP-GlcNAc). The C-terminal domain catalyzes the transfer of acetyl group from acetyl coenzyme A to glucosamine-1-phosphate (GlcN-1-P) to produce N-acetylglucosamine-1-phosphate (GlcNAc-1-P), which is converted into UDP-GlcNAc by the transfer of uridine 5-monophosphate (from uridine 5-triphosphate), a reaction catalyzed by the N-terminal domain. In Pseudarthrobacter chlorophenolicus (strain ATCC 700700 / DSM 12829 / CIP 107037 / JCM 12360 / KCTC 9906 / NCIMB 13794 / A6) (Arthrobacter chlorophenolicus), this protein is Bifunctional protein GlmU.